A 258-amino-acid polypeptide reads, in one-letter code: Terpene cyclase macJ (258 aa).

7 helical membrane passes run 29–49 (VPDGFTAISGILWSISYILMA), 58–78 (YAMPLHCLCLNITWEAVYGFV), 83–103 (LLNQVVFAQWMIVDVVLFYAI), 124–144 (IIVVGCVICLWLHLAIAATFI), 151–171 (VVFMTAWPMQVLINFSSIAQL), 181–201 (SWGIWWTRMLGTIAAACCFFW), and 220–240 (FLLLGSIGSDMVYAAVYVYVQ).

Belongs to the paxB family.

The protein localises to the membrane. It participates in secondary metabolite biosynthesis; terpenoid biosynthesis. Its function is as follows. Terpene cyclase; part of the gene cluster that mediates the biosynthesis of macrophorins, isoprenoid epoxycyclohexenones containing cyclized drimane moieties. The first step of the pathway is the synthesis of 6-methylsalicylic acid (6-MSA) by the polyketide synthase macA. 6-MSA is then converted to m-cresol by the decarboxylase macB. The cytochrome P450 monooxygenase macC then catalyzes the oxidation of m-cresol to toluquinol. Epoxidation of toluquinol is then performed by the short chain dehydrogenase macD, with the help of macE, and a further prenylation by macG leads to 7-deacetoxyyanuthone A. The next step is the hydroxylation of C-22 of 7-deacetoxyyanuthone A by the cytochrome P450 monooxygenase macH to yield 22-deacetylyanuthone A. O-Mevalon transferase macI then attaches mevalon to the hydroxyl group of 22-deacetylyanuthone A to produce yanuthone E. The terpene cyclase macJ catalyzes the cyclization of 22-deacetylyanuthone A to macrophorin A. MacJ is also able to catalyze cyclization of yanuthone E and 7-deacetoxyyanuthone A to their corresponding macrophorins. The macJ products can be further modified by macH and macJ, as well as by the FAD-dependent monooxygenase macF, to produce additional macrophorins, including 4'-oxomacrophorin A, 4'-oxomacrophorin D and 4'-oxomacrophorin E. In Penicillium terrestre, this protein is Terpene cyclase macJ.